A 279-amino-acid chain; its full sequence is DegV domain-containing protein M6_Spy1246 (279 aa).

Positions 4–278 (IKIVTDSSIT…EGAFAVMVRY (275 aa)) constitute a DegV domain. Hexadecanoate-binding residues include Thr62 and Ser95.

Functionally, may bind long-chain fatty acids, such as palmitate, and may play a role in lipid transport or fatty acid metabolism. This Streptococcus pyogenes serotype M6 (strain ATCC BAA-946 / MGAS10394) protein is DegV domain-containing protein M6_Spy1246.